The primary structure comprises 415 residues: Phosphoglycerate kinase (415 aa).

Residues 24–26 (DLN), R43, 66–69 (HLGR), R125, and R165 each bind substrate. ATP is bound by residues K215, G303, E334, and 363–366 (GGDS).

The protein belongs to the phosphoglycerate kinase family. Monomer.

Its subcellular location is the cytoplasm. The enzyme catalyses (2R)-3-phosphoglycerate + ATP = (2R)-3-phospho-glyceroyl phosphate + ADP. Its pathway is carbohydrate degradation; glycolysis; pyruvate from D-glyceraldehyde 3-phosphate: step 2/5. The chain is Phosphoglycerate kinase from Mycobacterium avium (strain 104).